We begin with the raw amino-acid sequence, 242 residues long: Biosynthetic peptidoglycan transglycosylase (242 aa).

The chain crosses the membrane as a helical span at residues 19–39; that stretch reads LMVVLAVFWAGGIALFSVAPV.

This sequence belongs to the glycosyltransferase 51 family.

The protein resides in the cell inner membrane. It carries out the reaction [GlcNAc-(1-&gt;4)-Mur2Ac(oyl-L-Ala-gamma-D-Glu-L-Lys-D-Ala-D-Ala)](n)-di-trans,octa-cis-undecaprenyl diphosphate + beta-D-GlcNAc-(1-&gt;4)-Mur2Ac(oyl-L-Ala-gamma-D-Glu-L-Lys-D-Ala-D-Ala)-di-trans,octa-cis-undecaprenyl diphosphate = [GlcNAc-(1-&gt;4)-Mur2Ac(oyl-L-Ala-gamma-D-Glu-L-Lys-D-Ala-D-Ala)](n+1)-di-trans,octa-cis-undecaprenyl diphosphate + di-trans,octa-cis-undecaprenyl diphosphate + H(+). The protein operates within cell wall biogenesis; peptidoglycan biosynthesis. In terms of biological role, peptidoglycan polymerase that catalyzes glycan chain elongation from lipid-linked precursors. This Shigella boydii serotype 4 (strain Sb227) protein is Biosynthetic peptidoglycan transglycosylase.